The sequence spans 101 residues: Gastrin (101 aa).

A signal peptide spans 1–21 (MPRLCVYMLVLVLALATFSEA). Residues 23-101 (WKPRSQLQDA…FGRRSAEEDQ (79 aa)) are disordered. A compositionally biased stretch (polar residues) spans 25-37 (PRSQLQDASSGPG). A Sulfotyrosine modification is found at Tyr87. Residue Phe92 is modified to Phenylalanine amide. A compositionally biased stretch (basic and acidic residues) spans 92–101 (FGRRSAEEDQ). Phosphoserine is present on Ser96. The propeptide occupies 96-101 (SAEEDQ).

It belongs to the gastrin/cholecystokinin family. Post-translationally, sulfation enhances proteolytic processing, and blocks peptide degradation. Levels of sulfation differ between proteolytically-cleaved gastrins and between tissues. In terms of tissue distribution, abundantly expressed in the stomach and duodenum. Low levels in brain, ovary and pancreas.

It localises to the secreted. In terms of biological role, gastrin stimulates the stomach mucosa to produce and secrete hydrochloric acid and the pancreas to secrete its digestive enzymes. It also stimulates smooth muscle contraction and increases blood circulation and water secretion in the stomach and intestine. The protein is Gastrin (Gast) of Mus musculus (Mouse).